A 317-amino-acid chain; its full sequence is Beta-ketoacyl-[acyl-carrier-protein] synthase III (317 aa).

Residues C112 and H244 contribute to the active site. Positions 245–249 (QANIR) are ACP-binding. N274 is an active-site residue.

Belongs to the thiolase-like superfamily. FabH family. As to quaternary structure, homodimer.

It is found in the cytoplasm. The enzyme catalyses malonyl-[ACP] + acetyl-CoA + H(+) = 3-oxobutanoyl-[ACP] + CO2 + CoA. It participates in lipid metabolism; fatty acid biosynthesis. Catalyzes the condensation reaction of fatty acid synthesis by the addition to an acyl acceptor of two carbons from malonyl-ACP. Catalyzes the first condensation reaction which initiates fatty acid synthesis and may therefore play a role in governing the total rate of fatty acid production. Possesses both acetoacetyl-ACP synthase and acetyl transacylase activities. Its substrate specificity determines the biosynthesis of branched-chain and/or straight-chain of fatty acids. The chain is Beta-ketoacyl-[acyl-carrier-protein] synthase III from Rickettsia akari (strain Hartford).